The primary structure comprises 174 residues: Shikimate kinase (174 aa).

Position 15-20 (15-20 (GTGKST)) interacts with ATP. S19 is a Mg(2+) binding site. Substrate is bound by residues D37, R61, and G82. Residue R120 coordinates ATP. R138 contributes to the substrate binding site.

This sequence belongs to the shikimate kinase family. As to quaternary structure, monomer. The cofactor is Mg(2+).

The protein localises to the cytoplasm. The enzyme catalyses shikimate + ATP = 3-phosphoshikimate + ADP + H(+). The protein operates within metabolic intermediate biosynthesis; chorismate biosynthesis; chorismate from D-erythrose 4-phosphate and phosphoenolpyruvate: step 5/7. Functionally, catalyzes the specific phosphorylation of the 3-hydroxyl group of shikimic acid using ATP as a cosubstrate. The sequence is that of Shikimate kinase from Staphylococcus aureus (strain MRSA252).